Consider the following 84-residue polypeptide: Protein Tlp homolog (84 aa).

Positions 1 to 20 (MGKEERYTKKPKPDDRSDNV) are disordered.

The protein belongs to the Tlp family.

The protein is Protein Tlp homolog of Caldanaerobacter subterraneus subsp. tengcongensis (strain DSM 15242 / JCM 11007 / NBRC 100824 / MB4) (Thermoanaerobacter tengcongensis).